A 276-amino-acid polypeptide reads, in one-letter code: Bifunctional protein FolD (276 aa).

NADP(+) contacts are provided by residues 157-159, S182, and I223; that span reads NRS.

This sequence belongs to the tetrahydrofolate dehydrogenase/cyclohydrolase family. Homodimer.

It catalyses the reaction (6R)-5,10-methylene-5,6,7,8-tetrahydrofolate + NADP(+) = (6R)-5,10-methenyltetrahydrofolate + NADPH. It carries out the reaction (6R)-5,10-methenyltetrahydrofolate + H2O = (6R)-10-formyltetrahydrofolate + H(+). It participates in one-carbon metabolism; tetrahydrofolate interconversion. Catalyzes the oxidation of 5,10-methylenetetrahydrofolate to 5,10-methenyltetrahydrofolate and then the hydrolysis of 5,10-methenyltetrahydrofolate to 10-formyltetrahydrofolate. The sequence is that of Bifunctional protein FolD from Thermoplasma acidophilum (strain ATCC 25905 / DSM 1728 / JCM 9062 / NBRC 15155 / AMRC-C165).